The primary structure comprises 300 residues: Small ribosomal subunit protein uS2 (300 aa).

The tract at residues 269–300 (WEADGADWAASSAAAPAESWAAEAQGAEGAKW) is disordered.

It belongs to the universal ribosomal protein uS2 family. In terms of assembly, component of the small ribosomal subunit. Mature ribosomes consist of a small (40S) and a large (60S) subunit. The 40S subunit contains about 33 different proteins and 1 molecule of RNA (18S). The 60S subunit contains about 49 different proteins and 3 molecules of RNA (25S, 5.8S and 5S). Interacts with rps21.

Its subcellular location is the cytoplasm. Required for the assembly and/or stability of the 40S ribosomal subunit. Required for the processing of the 20S rRNA-precursor to mature 18S rRNA in a late step of the maturation of 40S ribosomal subunits. This chain is Small ribosomal subunit protein uS2 (rps0), found in Aspergillus terreus (strain NIH 2624 / FGSC A1156).